Reading from the N-terminus, the 267-residue chain is Phosphate import ATP-binding protein PstB (267 aa).

The region spanning 21 to 262 (VAARNLDFYY…PSKQQTEDYI (242 aa)) is the ABC transporter domain. ATP is bound at residue 53 to 60 (GPSGCGKS).

Belongs to the ABC transporter superfamily. Phosphate importer (TC 3.A.1.7) family. The complex is composed of two ATP-binding proteins (PstB), two transmembrane proteins (PstC and PstA) and a solute-binding protein (PstS).

Its subcellular location is the cell inner membrane. The enzyme catalyses phosphate(out) + ATP + H2O = ADP + 2 phosphate(in) + H(+). Part of the ABC transporter complex PstSACB involved in phosphate import. Responsible for energy coupling to the transport system. This is Phosphate import ATP-binding protein PstB from Xanthomonas axonopodis pv. citri (strain 306).